The chain runs to 152 residues: Nucleoside diphosphate kinase (152 aa).

ATP-binding residues include Lys11, Phe59, Arg87, Thr93, Arg104, and Asn114. Residue His117 is the Pros-phosphohistidine intermediate of the active site.

This sequence belongs to the NDK family. As to quaternary structure, homotetramer. It depends on Mg(2+) as a cofactor.

Its subcellular location is the cytoplasm. The enzyme catalyses a 2'-deoxyribonucleoside 5'-diphosphate + ATP = a 2'-deoxyribonucleoside 5'-triphosphate + ADP. The catalysed reaction is a ribonucleoside 5'-diphosphate + ATP = a ribonucleoside 5'-triphosphate + ADP. Its function is as follows. Major role in the synthesis of nucleoside triphosphates other than ATP. The ATP gamma phosphate is transferred to the NDP beta phosphate via a ping-pong mechanism, using a phosphorylated active-site intermediate. In Prochlorococcus marinus (strain MIT 9515), this protein is Nucleoside diphosphate kinase.